A 101-amino-acid chain; its full sequence is MERLDKAALNALQPSDFRNESSLASTLKTLLFFTALMITVPIGLYFTTKSYVFEGAFGMSNRDSYFYAAIVAVVAVHVVLALFVYVAWNEGSRQWREGKQD.

Topologically, residues Met-1–Ser-25 are cytoplasmic. Residues Thr-26–Phe-46 traverse the membrane as a helical segment. Topologically, residues Thr-47–Tyr-65 are lumenal. Residues Phe-66–Val-86 traverse the membrane as a helical segment. The Cytoplasmic portion of the chain corresponds to Ala-87 to Asp-101.

This sequence belongs to the VMA21 family. As to quaternary structure, associates with the V0 complex of the vacuolar ATPase (V-ATPase). Interacts with ATP6AP2.

It localises to the endoplasmic reticulum membrane. The protein resides in the endoplasmic reticulum-Golgi intermediate compartment membrane. The protein localises to the cytoplasmic vesicle. It is found in the COPII-coated vesicle membrane. Its function is as follows. Required for the assembly of the V0 complex of the vacuolar ATPase (V-ATPase) in the endoplasmic reticulum. The polypeptide is Vacuolar ATPase assembly integral membrane protein VMA21 (Bos taurus (Bovine)).